Consider the following 51-residue polypeptide: MRELIRLVSSAGTGHFYTTDKNKRTTPDKIEIKKYDPVVRKHVVYKEAKIK.

This sequence belongs to the bacterial ribosomal protein bL33 family.

The protein is Large ribosomal subunit protein bL33 of Pseudomonas putida (strain ATCC 47054 / DSM 6125 / CFBP 8728 / NCIMB 11950 / KT2440).